The sequence spans 542 residues: CTP synthase (542 aa).

Positions 1–265 are amidoligase domain; it reads MARYVFITGG…DNEVLAAFGI (265 aa). Residue Ser13 participates in CTP binding. Ser13 contacts UTP. ATP-binding positions include 14–19 and Asp71; that span reads SLGKGI. Positions 71 and 139 each coordinate Mg(2+). CTP contacts are provided by residues 146–148, 186–191, and Lys222; these read DIE and KTKPTQ. UTP-binding positions include 186–191 and Lys222; that span reads KTKPTQ. In terms of domain architecture, Glutamine amidotransferase type-1 spans 291–541; it reads TIAIVGKYTG…IEAALEQSRL (251 aa). Gly353 is an L-glutamine binding site. Catalysis depends on Cys380, which acts as the Nucleophile; for glutamine hydrolysis. L-glutamine contacts are provided by residues 381–384, Glu404, and Arg469; that span reads FGMQ. Active-site residues include His514 and Glu516.

Belongs to the CTP synthase family. In terms of assembly, homotetramer.

The enzyme catalyses UTP + L-glutamine + ATP + H2O = CTP + L-glutamate + ADP + phosphate + 2 H(+). It carries out the reaction L-glutamine + H2O = L-glutamate + NH4(+). The catalysed reaction is UTP + NH4(+) + ATP = CTP + ADP + phosphate + 2 H(+). Its pathway is pyrimidine metabolism; CTP biosynthesis via de novo pathway; CTP from UDP: step 2/2. Its activity is regulated as follows. Allosterically activated by GTP, when glutamine is the substrate; GTP has no effect on the reaction when ammonia is the substrate. The allosteric effector GTP functions by stabilizing the protein conformation that binds the tetrahedral intermediate(s) formed during glutamine hydrolysis. Inhibited by the product CTP, via allosteric rather than competitive inhibition. Its function is as follows. Catalyzes the ATP-dependent amination of UTP to CTP with either L-glutamine or ammonia as the source of nitrogen. Regulates intracellular CTP levels through interactions with the four ribonucleotide triphosphates. In Rhizobium meliloti (strain 1021) (Ensifer meliloti), this protein is CTP synthase.